The sequence spans 149 residues: Transcriptional repressor NrdR (149 aa).

Residues 3 to 34 fold into a zinc finger; sequence CPFCSAVDTKVIDSRLVAEGHQVRRRRECLLC. The 91-residue stretch at 49–139 folds into the ATP-cone domain; that stretch reads PRVIKSNGSR…VYRSFEDIRE (91 aa).

It belongs to the NrdR family. The cofactor is Zn(2+).

In terms of biological role, negatively regulates transcription of bacterial ribonucleotide reductase nrd genes and operons by binding to NrdR-boxes. This chain is Transcriptional repressor NrdR, found in Aeromonas hydrophila subsp. hydrophila (strain ATCC 7966 / DSM 30187 / BCRC 13018 / CCUG 14551 / JCM 1027 / KCTC 2358 / NCIMB 9240 / NCTC 8049).